Consider the following 200-residue polypeptide: MAGLKQHSGLVVPLDAANVDTDAIIPKQFLQAITRVGFGKHLFHEWRYLDAEETQLNPDFVLNFPQYQGATILLARKNLGCGSSREHAPWALADYGFKVMIAPSFADIFYNNSLNNHMLPIRLSEEEVEEIFQWVWANEGKQIHIDLEAMTVTVGDKIYRFELDEFRRHCLLNGLDNIGLTLQHEDAITAYESKIPAFLR.

This sequence belongs to the LeuD family. LeuD type 1 subfamily. Heterodimer of LeuC and LeuD.

The enzyme catalyses (2R,3S)-3-isopropylmalate = (2S)-2-isopropylmalate. It participates in amino-acid biosynthesis; L-leucine biosynthesis; L-leucine from 3-methyl-2-oxobutanoate: step 2/4. Functionally, catalyzes the isomerization between 2-isopropylmalate and 3-isopropylmalate, via the formation of 2-isopropylmaleate. This chain is 3-isopropylmalate dehydratase small subunit, found in Actinobacillus pleuropneumoniae serotype 3 (strain JL03).